The following is a 138-amino-acid chain: ATP synthase epsilon chain (138 aa).

The protein belongs to the ATPase epsilon chain family. In terms of assembly, F-type ATPases have 2 components, CF(1) - the catalytic core - and CF(0) - the membrane proton channel. CF(1) has five subunits: alpha(3), beta(3), gamma(1), delta(1), epsilon(1). CF(0) has three main subunits: a, b and c.

The protein resides in the cell inner membrane. Produces ATP from ADP in the presence of a proton gradient across the membrane. This Cupriavidus metallidurans (strain ATCC 43123 / DSM 2839 / NBRC 102507 / CH34) (Ralstonia metallidurans) protein is ATP synthase epsilon chain.